Consider the following 353-residue polypeptide: Photosystem II D2 protein (353 aa).

Thr2 carries the N-acetylthreonine modification. Thr2 carries the phosphothreonine modification. Residues 41–61 (CAYFAVGGWFTGTTFVTSWYT) traverse the membrane as a helical segment. Residue His118 coordinates chlorophyll a. A helical membrane pass occupies residues 125 to 141 (GFMLRQFELARSVQLRP). Pheophytin a-binding residues include Gln130 and Asn143. The chain crosses the membrane as a helical span at residues 153–166 (VFVSVFLIYPLGQS). Residue His198 participates in chlorophyll a binding. The chain crosses the membrane as a helical span at residues 208–228 (AALLCAIHGATVENTLFEDGD). Residues His215 and Phe262 each coordinate a plastoquinone. His215 contacts Fe cation. Residue His269 participates in Fe cation binding. Residues 279 to 295 (GLWMSALGVVGLALNLR) traverse the membrane as a helical segment.

The protein belongs to the reaction center PufL/M/PsbA/D family. As to quaternary structure, PSII is composed of 1 copy each of membrane proteins PsbA, PsbB, PsbC, PsbD, PsbE, PsbF, PsbH, PsbI, PsbJ, PsbK, PsbL, PsbM, PsbT, PsbX, PsbY, PsbZ, Psb30/Ycf12, at least 3 peripheral proteins of the oxygen-evolving complex and a large number of cofactors. It forms dimeric complexes. The D1/D2 heterodimer binds P680, chlorophylls that are the primary electron donor of PSII, and subsequent electron acceptors. It shares a non-heme iron and each subunit binds pheophytin, quinone, additional chlorophylls, carotenoids and lipids. There is also a Cl(-1) ion associated with D1 and D2, which is required for oxygen evolution. The PSII complex binds additional chlorophylls, carotenoids and specific lipids. serves as cofactor.

It localises to the plastid. Its subcellular location is the chloroplast thylakoid membrane. The catalysed reaction is 2 a plastoquinone + 4 hnu + 2 H2O = 2 a plastoquinol + O2. Functionally, photosystem II (PSII) is a light-driven water:plastoquinone oxidoreductase that uses light energy to abstract electrons from H(2)O, generating O(2) and a proton gradient subsequently used for ATP formation. It consists of a core antenna complex that captures photons, and an electron transfer chain that converts photonic excitation into a charge separation. The D1/D2 (PsbA/PsbD) reaction center heterodimer binds P680, the primary electron donor of PSII as well as several subsequent electron acceptors. D2 is needed for assembly of a stable PSII complex. In Ipomoea purpurea (Common morning glory), this protein is Photosystem II D2 protein.